A 469-amino-acid polypeptide reads, in one-letter code: Bifunctional protein GlmU (469 aa).

The interval 1 to 236 (MLNIKLNIVI…ISEINGINDC (236 aa)) is pyrophosphorylase. UDP-N-acetyl-alpha-D-glucosamine contacts are provided by residues 11-14 (LAAG), lysine 25, glutamine 83, 88-89 (GT), 110-112 (YGD), glycine 147, glutamate 161, asparagine 176, and asparagine 234. Aspartate 112 contributes to the Mg(2+) binding site. Residue asparagine 234 coordinates Mg(2+). The linker stretch occupies residues 237–257 (AQLANLERLYQKEQAESLLRI). The tract at residues 258-469 (GVIIADPNRF…KKKIRYNIIY (212 aa)) is N-acetyltransferase. Positions 340 and 358 each coordinate UDP-N-acetyl-alpha-D-glucosamine. The active-site Proton acceptor is histidine 370. Positions 373 and 384 each coordinate UDP-N-acetyl-alpha-D-glucosamine. Acetyl-CoA-binding positions include alanine 387, 393–394 (NY), serine 412, alanine 430, and arginine 447.

The protein in the N-terminal section; belongs to the N-acetylglucosamine-1-phosphate uridyltransferase family. In the C-terminal section; belongs to the transferase hexapeptide repeat family. In terms of assembly, homotrimer. It depends on Mg(2+) as a cofactor.

It localises to the cytoplasm. The enzyme catalyses alpha-D-glucosamine 1-phosphate + acetyl-CoA = N-acetyl-alpha-D-glucosamine 1-phosphate + CoA + H(+). The catalysed reaction is N-acetyl-alpha-D-glucosamine 1-phosphate + UTP + H(+) = UDP-N-acetyl-alpha-D-glucosamine + diphosphate. It functions in the pathway nucleotide-sugar biosynthesis; UDP-N-acetyl-alpha-D-glucosamine biosynthesis; N-acetyl-alpha-D-glucosamine 1-phosphate from alpha-D-glucosamine 6-phosphate (route II): step 2/2. Its pathway is nucleotide-sugar biosynthesis; UDP-N-acetyl-alpha-D-glucosamine biosynthesis; UDP-N-acetyl-alpha-D-glucosamine from N-acetyl-alpha-D-glucosamine 1-phosphate: step 1/1. It participates in bacterial outer membrane biogenesis; LPS lipid A biosynthesis. Functionally, catalyzes the last two sequential reactions in the de novo biosynthetic pathway for UDP-N-acetylglucosamine (UDP-GlcNAc). The C-terminal domain catalyzes the transfer of acetyl group from acetyl coenzyme A to glucosamine-1-phosphate (GlcN-1-P) to produce N-acetylglucosamine-1-phosphate (GlcNAc-1-P), which is converted into UDP-GlcNAc by the transfer of uridine 5-monophosphate (from uridine 5-triphosphate), a reaction catalyzed by the N-terminal domain. The protein is Bifunctional protein GlmU of Baumannia cicadellinicola subsp. Homalodisca coagulata.